The following is a 505-amino-acid chain: Deoxyguanosinetriphosphate triphosphohydrolase (505 aa).

The HD domain occupies 66-273 (RLTHSLEVQQ…MEAADDISYC (208 aa)).

The protein belongs to the dGTPase family. Type 1 subfamily. In terms of assembly, homotetramer. It depends on Mg(2+) as a cofactor.

It catalyses the reaction dGTP + H2O = 2'-deoxyguanosine + triphosphate + H(+). Its function is as follows. dGTPase preferentially hydrolyzes dGTP over the other canonical NTPs. This Escherichia fergusonii (strain ATCC 35469 / DSM 13698 / CCUG 18766 / IAM 14443 / JCM 21226 / LMG 7866 / NBRC 102419 / NCTC 12128 / CDC 0568-73) protein is Deoxyguanosinetriphosphate triphosphohydrolase.